The sequence spans 469 residues: MAPVMRLGSAALRSSIHLTSRQTAFTAARCYSSKTQTLKERFAELLPENIEKIKALRKEHGSKVVDKVTLDQVYGGARGIKCLVWEGSVLDAEEGIRFRGKTIPECQELLPKAPGGKEPLPEGLFWLLLTGEVPSEQQVRDLSAEWAARSDVPKFIEELIDRCPSDLHPMAQLSLAVTALEHTSSFARAYAKGINKKEYWGYTFEDSMDLIAKLPTIAARIYQNVFKGGKVAAVQKDKDYSFNFANQLGFGDNKDFVELLRLYLTIHTDHEGGNVSAHTTHLVGSALSSPFLSVAAGLNGLAGPLHGLANQEVLNWLTEMKKVIGDDLSDEAITKYLWDTLNAGRVVPGYGHAVLRKTDPRYSAQRKFAQEHLPEDPMFQLVSQVYKIAPKVLTEHGKTKNPYPNVDAHSGVLLQHYGLTEANYYTVLFGVSRAIGVLPQLIIDRAVGAPIERPKSYSTDKWIEICKKL.

Residues 1-33 (MAPVMRLGSAALRSSIHLTSRQTAFTAARCYSS) constitute a mitochondrion transit peptide. Histidine 352 is a catalytic residue.

Belongs to the citrate synthase family.

Its subcellular location is the mitochondrion matrix. The catalysed reaction is oxaloacetate + acetyl-CoA + H2O = citrate + CoA + H(+). It participates in carbohydrate metabolism; tricarboxylic acid cycle; isocitrate from oxaloacetate: step 1/2. The chain is Citrate synthase, mitochondrial (cit-1) from Neurospora crassa (strain ATCC 24698 / 74-OR23-1A / CBS 708.71 / DSM 1257 / FGSC 987).